The chain runs to 388 residues: Phosphoribosylformylglycinamidine cyclo-ligase, chloroplastic/mitochondrial (388 aa).

Belongs to the AIR synthase family.

Its subcellular location is the plastid. It localises to the chloroplast. The protein resides in the mitochondrion. The catalysed reaction is 2-formamido-N(1)-(5-O-phospho-beta-D-ribosyl)acetamidine + ATP = 5-amino-1-(5-phospho-beta-D-ribosyl)imidazole + ADP + phosphate + H(+). Its pathway is purine metabolism; IMP biosynthesis via de novo pathway; 5-amino-1-(5-phospho-D-ribosyl)imidazole from N(2)-formyl-N(1)-(5-phospho-D-ribosyl)glycinamide: step 2/2. The protein is Phosphoribosylformylglycinamidine cyclo-ligase, chloroplastic/mitochondrial (PUR5) of Vigna unguiculata (Cowpea).